Reading from the N-terminus, the 115-residue chain is Protein V2 (115 aa).

Belongs to the geminiviridae protein AV2/V2 family. In terms of assembly, interacts with host SGS3.

It is found in the host cytoplasm. Its subcellular location is the host perinuclear region. Its function is as follows. Through its interaction with host SGS3, acts as a suppressor of RNA-mediated gene silencing, also known as post-transcriptional gene silencing (PTGS), a mechanism of plant viral defense that limits the accumulation of viral RNAs. In Tomato yellow leaf curl Sardinia virus (isolate Spain-2) (TYLCSV), this protein is Protein V2.